Here is a 301-residue protein sequence, read N- to C-terminus: 4-hydroxy-tetrahydrodipicolinate synthase (301 aa).

Threonine 57 serves as a coordination point for pyruvate. Tyrosine 143 (proton donor/acceptor) is an active-site residue. The active-site Schiff-base intermediate with substrate is lysine 171. Isoleucine 211 is a binding site for pyruvate.

The protein belongs to the DapA family. Homotetramer; dimer of dimers.

It localises to the cytoplasm. It carries out the reaction L-aspartate 4-semialdehyde + pyruvate = (2S,4S)-4-hydroxy-2,3,4,5-tetrahydrodipicolinate + H2O + H(+). It participates in amino-acid biosynthesis; L-lysine biosynthesis via DAP pathway; (S)-tetrahydrodipicolinate from L-aspartate: step 3/4. In terms of biological role, catalyzes the condensation of (S)-aspartate-beta-semialdehyde [(S)-ASA] and pyruvate to 4-hydroxy-tetrahydrodipicolinate (HTPA). The chain is 4-hydroxy-tetrahydrodipicolinate synthase from Bifidobacterium longum (strain DJO10A).